A 286-amino-acid polypeptide reads, in one-letter code: UDP-3-O-acyl-N-acetylglucosamine deacetylase (286 aa).

Zn(2+) is bound by residues H81, H240, and D244. The Proton donor role is filled by H266.

Belongs to the LpxC family. It depends on Zn(2+) as a cofactor.

The enzyme catalyses a UDP-3-O-[(3R)-3-hydroxyacyl]-N-acetyl-alpha-D-glucosamine + H2O = a UDP-3-O-[(3R)-3-hydroxyacyl]-alpha-D-glucosamine + acetate. The protein operates within glycolipid biosynthesis; lipid IV(A) biosynthesis; lipid IV(A) from (3R)-3-hydroxytetradecanoyl-[acyl-carrier-protein] and UDP-N-acetyl-alpha-D-glucosamine: step 2/6. Catalyzes the hydrolysis of UDP-3-O-myristoyl-N-acetylglucosamine to form UDP-3-O-myristoylglucosamine and acetate, the committed step in lipid A biosynthesis. This chain is UDP-3-O-acyl-N-acetylglucosamine deacetylase, found in Francisella tularensis subsp. tularensis (strain FSC 198).